Here is a 34-residue protein sequence, read N- to C-terminus: Photosystem II reaction center protein T (34 aa).

The chain crosses the membrane as a helical span at residues 3 to 23 (ALVYTFLLVSTLGIIFFAIFF).

It belongs to the PsbT family. In terms of assembly, PSII is composed of 1 copy each of membrane proteins PsbA, PsbB, PsbC, PsbD, PsbE, PsbF, PsbH, PsbI, PsbJ, PsbK, PsbL, PsbM, PsbT, PsbY, PsbZ, Psb30/Ycf12, at least 3 peripheral proteins of the oxygen-evolving complex and a large number of cofactors. It forms dimeric complexes.

Its subcellular location is the plastid. The protein resides in the chloroplast thylakoid membrane. In terms of biological role, found at the monomer-monomer interface of the photosystem II (PS II) dimer, plays a role in assembly and dimerization of PSII. PSII is a light-driven water plastoquinone oxidoreductase, using light energy to abstract electrons from H(2)O, generating a proton gradient subsequently used for ATP formation. The polypeptide is Photosystem II reaction center protein T (Solanum lycopersicum (Tomato)).